Here is a 345-residue protein sequence, read N- to C-terminus: Dihydroorotase (345 aa).

Zn(2+) contacts are provided by histidine 13 and histidine 15. Substrate contacts are provided by residues histidine 15–arginine 17 and asparagine 41. Positions 99, 136, 174, and 247 each coordinate Zn(2+). The residue at position 99 (lysine 99) is an N6-carboxylysine. A substrate-binding site is contributed by histidine 136. Residue aspartate 247 is part of the active site. 2 residues coordinate substrate: histidine 251 and alanine 263.

It belongs to the metallo-dependent hydrolases superfamily. DHOase family. Class II DHOase subfamily. In terms of assembly, homodimer. The cofactor is Zn(2+).

The catalysed reaction is (S)-dihydroorotate + H2O = N-carbamoyl-L-aspartate + H(+). Its pathway is pyrimidine metabolism; UMP biosynthesis via de novo pathway; (S)-dihydroorotate from bicarbonate: step 3/3. In terms of biological role, catalyzes the reversible cyclization of carbamoyl aspartate to dihydroorotate. This chain is Dihydroorotase, found in Halorhodospira halophila (strain DSM 244 / SL1) (Ectothiorhodospira halophila (strain DSM 244 / SL1)).